A 425-amino-acid chain; its full sequence is Enolase (425 aa).

Q162 provides a ligand contact to (2R)-2-phosphoglycerate. E204 (proton donor) is an active-site residue. Residues D241, E284, and D311 each contribute to the Mg(2+) site. Residues K336, R365, S366, and K387 each coordinate (2R)-2-phosphoglycerate. Residue K336 is the Proton acceptor of the active site.

It belongs to the enolase family. The cofactor is Mg(2+).

The protein localises to the cytoplasm. Its subcellular location is the secreted. The protein resides in the cell surface. It carries out the reaction (2R)-2-phosphoglycerate = phosphoenolpyruvate + H2O. The protein operates within carbohydrate degradation; glycolysis; pyruvate from D-glyceraldehyde 3-phosphate: step 4/5. Catalyzes the reversible conversion of 2-phosphoglycerate (2-PG) into phosphoenolpyruvate (PEP). It is essential for the degradation of carbohydrates via glycolysis. The protein is Enolase of Brucella ovis (strain ATCC 25840 / 63/290 / NCTC 10512).